Reading from the N-terminus, the 351-residue chain is Probable dual-specificity RNA methyltransferase RlmN (351 aa).

The active-site Proton acceptor is the E97. The 235-residue stretch at 103 to 337 folds into the Radical SAM core domain; that stretch reads YDYGNTVCIS…VTVRKERGVD (235 aa). An intrachain disulfide couples C110 to C342. Residues C117, C121, and C124 each contribute to the [4Fe-4S] cluster site. Residues 166–167, S198, 221–223, and N299 contribute to the S-adenosyl-L-methionine site; these read GE and SLH. C342 functions as the S-methylcysteine intermediate in the catalytic mechanism.

It belongs to the radical SAM superfamily. RlmN family. The cofactor is [4Fe-4S] cluster.

The protein resides in the cytoplasm. It catalyses the reaction adenosine(2503) in 23S rRNA + 2 reduced [2Fe-2S]-[ferredoxin] + 2 S-adenosyl-L-methionine = 2-methyladenosine(2503) in 23S rRNA + 5'-deoxyadenosine + L-methionine + 2 oxidized [2Fe-2S]-[ferredoxin] + S-adenosyl-L-homocysteine. The enzyme catalyses adenosine(37) in tRNA + 2 reduced [2Fe-2S]-[ferredoxin] + 2 S-adenosyl-L-methionine = 2-methyladenosine(37) in tRNA + 5'-deoxyadenosine + L-methionine + 2 oxidized [2Fe-2S]-[ferredoxin] + S-adenosyl-L-homocysteine. Functionally, specifically methylates position 2 of adenine 2503 in 23S rRNA and position 2 of adenine 37 in tRNAs. In Natranaerobius thermophilus (strain ATCC BAA-1301 / DSM 18059 / JW/NM-WN-LF), this protein is Probable dual-specificity RNA methyltransferase RlmN.